The primary structure comprises 346 residues: Angiopoietin-related protein 7 (346 aa).

The signal sequence occupies residues 1–26 (MLKKPLSAVTWLCIFIVAFVSHPAWL). Residues 39–119 (QLKAANCCEE…DIMQLQAAQT (81 aa)) are a coiled coil. N58 carries N-linked (GlcNAc...) asparagine glycosylation. Positions 122–343 (QTSADAIYDC…RVEMKIRPED (222 aa)) constitute a Fibrinogen C-terminal domain. Residues C131 and C162 are joined by a disulfide bond. N-linked (GlcNAc...) asparagine glycans are attached at residues N253 and N267. C285 and C298 are disulfide-bonded.

Homotetramer; disulfide-linked. Highly expressed in the cornea (at protein level). Expression is restricted to the stromal layer. Also detected at the junction between the corneal stromal layer and the conjuctiva. Not detected in the sclera.

It is found in the secreted. Has a role in the formation and organization of the extracellular matrix. In the eye, it functions as a mediator of dexamethasone-induced matrix deposition in the trabecular meshwork, the tissue responsible for the outflow of the ocular aqueous humor and for the maintenance of intraocular pressure. Is a negative regulator of angiogenesis in the cornea, and plays a major role in maintaining corneal avascularity and transparency. This is Angiopoietin-related protein 7 (ANGPTL7) from Homo sapiens (Human).